The following is a 127-amino-acid chain: Calcitonin receptor-stimulating peptide 2 (127 aa).

The signal sequence occupies residues 1-25 (MGFWKLSPFLAIGLLVMYQAGILQA). A propeptide spanning residues 26–81 (APFRSALENPLESATLTEDEICVLLTAVVKDYVQMKARELQQEQETEGSSLTAQKS) is cleaved from the precursor. The interval 65 to 85 (LQQEQETEGSSLTAQKSSCKD) is disordered. Residues 72-81 (EGSSLTAQKS) are compositionally biased toward polar residues. An intrachain disulfide couples Cys83 to Cys88.

The protein belongs to the calcitonin family.

The protein resides in the secreted. This Canis lupus familiaris (Dog) protein is Calcitonin receptor-stimulating peptide 2 (CRSP2).